The primary structure comprises 21 residues: Serine protease inhibitor 3 (21 aa).

It belongs to the protease inhibitor I3 (leguminous Kunitz-type inhibitor) family. Tubers.

Its subcellular location is the vacuole. Its function is as follows. Inhibits trypsin and chymotrypsin (serine proteases). Does not inhibit elastase, subtilisin, cathepsin L nor papain (serine and cysteine proteases). Protects the plant by inhibiting proteases of invading organisms, decreasing both hyphal growth and zoospores germination of Phytophthora infestans. This Solanum tuberosum (Potato) protein is Serine protease inhibitor 3.